The sequence spans 106 residues: Pyrimidine/purine nucleoside phosphorylase (106 aa).

Belongs to the nucleoside phosphorylase PpnP family.

It carries out the reaction a purine D-ribonucleoside + phosphate = a purine nucleobase + alpha-D-ribose 1-phosphate. It catalyses the reaction adenosine + phosphate = alpha-D-ribose 1-phosphate + adenine. The catalysed reaction is cytidine + phosphate = cytosine + alpha-D-ribose 1-phosphate. The enzyme catalyses guanosine + phosphate = alpha-D-ribose 1-phosphate + guanine. It carries out the reaction inosine + phosphate = alpha-D-ribose 1-phosphate + hypoxanthine. It catalyses the reaction thymidine + phosphate = 2-deoxy-alpha-D-ribose 1-phosphate + thymine. The catalysed reaction is uridine + phosphate = alpha-D-ribose 1-phosphate + uracil. The enzyme catalyses xanthosine + phosphate = alpha-D-ribose 1-phosphate + xanthine. Catalyzes the phosphorolysis of diverse nucleosides, yielding D-ribose 1-phosphate and the respective free bases. Can use uridine, adenosine, guanosine, cytidine, thymidine, inosine and xanthosine as substrates. Also catalyzes the reverse reactions. The chain is Pyrimidine/purine nucleoside phosphorylase from Burkholderia ambifaria (strain ATCC BAA-244 / DSM 16087 / CCUG 44356 / LMG 19182 / AMMD) (Burkholderia cepacia (strain AMMD)).